The following is a 259-amino-acid chain: Probable ABC transporter permease protein RBE_1340 (259 aa).

5 helical membrane passes run 25 to 45 (IFSLAAITSIIRPPLYFSLII), 49 to 69 (LFIGFYSLPVVAMTTFFSGAV), 148 to 168 (VIAAIITMPCLVLIGDVIGVM), 195 to 215 (PIDVISGLVKAGVFGFIISII), and 237 to 257 (AVVNSSILILISNYLITELFF).

The protein belongs to the MlaE permease family.

It localises to the cell inner membrane. In terms of biological role, could be part of an ABC transporter complex. The protein is Probable ABC transporter permease protein RBE_1340 of Rickettsia bellii (strain RML369-C).